Consider the following 917-residue polypeptide: Serine/arginine repetitive matrix protein 1 (917 aa).

An N-acetylmethionine modification is found at methionine 1. The interval 1–151 is necessary for DNA and RNA-binding; that stretch reads MDAGFFRGTS…ASMKKQDEDK (151 aa). Positions 1 to 156 are necessary for mRNA 3'-end cleavage and cytoplasmic accumulation; that stretch reads MDAGFFRGTS…QDEDKDKRDK (156 aa). Arginine 7 carries the post-translational modification Citrulline. One can recognise a PWI domain in the interval 27–126; sequence QLKFAECLEK…AGIPSAFLEL (100 aa). Lysine 127 participates in a covalent cross-link: Glycyl lysine isopeptide (Lys-Gly) (interchain with G-Cter in SUMO2). The segment covering 139-170 has biased composition (basic and acidic residues); sequence EKLASMKKQDEDKDKRDKEEKESSREKRERSR. A disordered region spans residues 139–917; the sequence is EKLASMKKQD…MRKAQVSPQS (779 aa). Lysine 140 bears the N6-acetyllysine mark. The segment covering 171–207 has biased composition (basic residues); the sequence is SPRRRKSRSPSPRRRSSPVRRERKRSHSRSPRHRTKS. Residues 214–234 show a composition bias toward basic and acidic residues; the sequence is PEKKEKTPELPEPSVKVKEPS. At threonine 220 the chain carries Phosphothreonine. Phosphoserine is present on serine 227. Residue lysine 231 forms a Glycyl lysine isopeptide (Lys-Gly) (interchain with G-Cter in SUMO1); alternate linkage. Lysine 231 is covalently cross-linked (Glycyl lysine isopeptide (Lys-Gly) (interchain with G-Cter in SUMO2); alternate). Serine 234 and serine 240 each carry phosphoserine. At threonine 241 the chain carries Phosphothreonine. Over residues 246-275 the composition is skewed to basic and acidic residues; the sequence is KVPKPEPIPEPKEPSPEKNSKKEKEKEKTR. A Glycyl lysine isopeptide (Lys-Gly) (interchain with G-Cter in SUMO2) cross-link involves residue lysine 249. At serine 260 the chain carries Phosphoserine. Composition is skewed to basic residues over residues 276-329 and 336-351; these read PRSR…RTPP and PRHRRSRSPVRRRRRS. Residues 300 to 702 form a necessary for speckles and matrix localization region; sequence RRHRSRSRSY…NKRHSPSPRP (403 aa). The segment covering 352–368 has biased composition (low complexity); that stretch reads SASLSGSSSSSSSSRSR. Phosphoserine occurs at positions 389, 391, 393, and 402. Threonine 406 carries the post-translational modification Phosphothreonine. At serine 414 the chain carries Phosphoserine. The residue at position 416 (threonine 416) is a Phosphothreonine. Residues serine 420, serine 429, serine 431, and serine 436 each carry the phosphoserine modification. Positions 428-438 are enriched in polar residues; sequence VSVSPGRTSGK. Residue lysine 447 forms a Glycyl lysine isopeptide (Lys-Gly) (interchain with G-Cter in SUMO2) linkage. Residues serine 450 and serine 452 each carry the phosphoserine modification. Lysine 459 is covalently cross-linked (Glycyl lysine isopeptide (Lys-Gly) (interchain with G-Cter in SUMO2)). Phosphoserine is present on residues serine 463 and serine 465. Lysine 472 participates in a covalent cross-link: Glycyl lysine isopeptide (Lys-Gly) (interchain with G-Cter in SUMO2). Serine 478 bears the Phosphoserine mark. Low complexity predominate over residues 478–501; it reads SVQQRRQYRRQNQQSSSDSGSSSS. A compositionally biased stretch (basic and acidic residues) spans 503 to 518; sequence EDERPKRSHVKNGEVG. 7 positions are modified to phosphoserine: serine 524, serine 526, serine 528, serine 530, serine 532, serine 563, and serine 565. Positions 557–574 are enriched in basic residues; it reads SGRRRRSPSPPPTRRRRS. Position 569 is a phosphothreonine (threonine 569). Phosphoserine occurs at positions 574 and 576. Positions 581-606 are enriched in basic residues; the sequence is PRRRRTPTPPPRRRTPSPPPRRRSPS. 3 positions are modified to phosphothreonine: threonine 586, threonine 588, and threonine 595. Residue serine 597 is modified to Phosphoserine. Low complexity predominate over residues 607–619; it reads PRRYSPPIQRRYS. Phosphotyrosine is present on tyrosine 610. A phosphoserine mark is found at serine 611, serine 619, and serine 621. Threonine 628 bears the Phosphothreonine mark. 5 positions are modified to phosphoserine: serine 630, serine 640, serine 642, serine 650, and serine 652. Positions 635–650 are enriched in basic residues; it reads PKRRASPSPPPKRRVS. The segment covering 663–677 has biased composition (basic residues); it reads TKRRSPSLSSKHRKG. Residues 699–713 are compositionally biased toward pro residues; that stretch reads SPRPRAPQTSSPPPV. Phosphoserine occurs at positions 708, 709, 718, 720, 726, and 728. Low complexity-rich tracts occupy residues 714 to 732, 749 to 772, and 782 to 799; these read RRGASSSPQRRQSPSPSTR, AASPSPQSVRRVSSSRSVSGSPEP, and SPVQSQSPSTNWSPAVPV. At threonine 731 the chain carries Phosphothreonine. Residues serine 751, serine 753, serine 761, serine 765, serine 767, serine 769, serine 782, serine 786, serine 788, and serine 790 each carry the phosphoserine modification. Position 791 is a phosphothreonine (threonine 791). A phosphoserine mark is found at serine 794 and serine 804. Threonine 806 is subject to Phosphothreonine. Phosphoserine occurs at positions 808, 810, and 815. Residues 822 to 847 show a composition bias toward basic residues; that stretch reads KKKKKKKDKKHKKDKKHKKHKKHKKE. Positions 850-879 are enriched in low complexity; sequence VAAAAAAAVTPAAIAAATTTLAQEEPVAAP. A Glycyl lysine isopeptide (Lys-Gly) (interchain with G-Cter in SUMO2) cross-link involves residue lysine 882. Threonine 885 carries the phosphothreonine modification. The residue at position 887 (serine 887) is a Phosphoserine. The span at 895-905 shows a compositional bias: basic and acidic residues; it reads DLEKHLREKAL. The residue at position 914 (serine 914) is a Phosphoserine.

This sequence belongs to the splicing factor SR family. In terms of assembly, identified in the spliceosome C complex. Found in a pre-mRNA splicing complex with SFRS4, SFRS5, SNRP70, SNRPA1, SRRM1 and SRRM2. Component of the minor spliceosome, which splices U12-type introns. Found in a pre-mRNA exonic splicing enhancer (ESE) complex with SNRP70, SNRPA1, SRRM1 and TRA2B/SFRS10. Found in a mRNA splicing-dependent exon junction complex (EJC) with DEK, PRPF8, NCBP1, RBM8A, RNPS1, SRRM1 and ALYREF/THOC4. Interacts with DDX39B, CPSF1, RBM8A, RNPS1, and ALYREF/THOC4. Seems to be a compound of RNA export complexes that are released from speckles in a ATP-dependent manner. Post-translationally, phosphorylated on multiple serine and threonine residues by DYRK3 during the G2-to-M transition, after the nuclear-envelope breakdown. Phosphorylation by DYRK3 promotes disassembly of nuclear speckles. Citrullinated by PADI4.

Functionally, part of pre- and post-splicing multiprotein mRNP complexes. As a component of the minor spliceosome, involved in the splicing of U12-type introns in pre-mRNAs. Involved in numerous pre-mRNA processing events. Promotes constitutive and exonic splicing enhancer (ESE)-dependent splicing activation by bridging together sequence-specific (SR family proteins, SFRS4, SFRS5 and TRA2B/SFRS10) and basal snRNP (SNRP70 and SNRPA1) factors of the spliceosome. Stimulates mRNA 3'-end cleavage independently of the formation of an exon junction complex. Binds both pre-mRNA and spliced mRNA 20-25 nt upstream of exon-exon junctions. Binds RNA and DNA with low sequence specificity and has similar preference for either double- or single-stranded nucleic acid substrates. The chain is Serine/arginine repetitive matrix protein 1 (SRRM1) from Pongo abelii (Sumatran orangutan).